Consider the following 125-residue polypeptide: Glucose-1-phosphate adenylyltransferase small subunit (125 aa).

The protein belongs to the bacterial/plant glucose-1-phosphate adenylyltransferase family. In terms of assembly, heterotetramer. In terms of tissue distribution, leaves.

Its subcellular location is the plastid. It localises to the chloroplast. It is found in the amyloplast. The catalysed reaction is alpha-D-glucose 1-phosphate + ATP + H(+) = ADP-alpha-D-glucose + diphosphate. It participates in glycan biosynthesis; starch biosynthesis. With respect to regulation, activated by 3'phosphoglycerate, inhibited by orthophosphate. Allosteric regulation. Functionally, this protein plays a role in synthesis of starch. It catalyzes the synthesis of the activated glycosyl donor, ADP-glucose from Glc-1-P and ATP. The chain is Glucose-1-phosphate adenylyltransferase small subunit (GLG1) from Zea mays (Maize).